Consider the following 333-residue polypeptide: MSAVSRIATLTRQSMLSALSDNNRLRLFSGSSNPSLSQEVARYLGMDIGPMLRKRFADGELYIQIQESIRGGDVYLIQPCCHPVNDNLMELLIMIDACRRASARQITAVLPYYGYARADRKTAGRESISAKLVANLITGAGAQRVLAMDLHSAQIQGYFDIPCDHMYGSPVIIDYLKSKQLTDLVVVSPDVGGVARARAFAKKLNDAPLAIIDKRRQSHNVAEVLNLIGDVDGKTAVLVDDMIDTAGTLSEGSRLLRAQGARQVYACATHAVFSEPAINRLSGGLFEEVIVTNTIPVPDDHHFPQLTILSVANLIGEAIWRIHEESSVSSMFR.

Position 58–60 (58–60) interacts with ATP; it reads DGE. Residues His151 and Asp190 each coordinate Mg(2+). Lys214 is an active-site residue. D-ribose 5-phosphate contacts are provided by residues Arg216, Asp240, and 244-248; that span reads DTAGT.

This sequence belongs to the ribose-phosphate pyrophosphokinase family. Class I subfamily. In terms of assembly, homohexamer. It depends on Mg(2+) as a cofactor.

It localises to the cytoplasm. It catalyses the reaction D-ribose 5-phosphate + ATP = 5-phospho-alpha-D-ribose 1-diphosphate + AMP + H(+). It participates in metabolic intermediate biosynthesis; 5-phospho-alpha-D-ribose 1-diphosphate biosynthesis; 5-phospho-alpha-D-ribose 1-diphosphate from D-ribose 5-phosphate (route I): step 1/1. In terms of biological role, involved in the biosynthesis of the central metabolite phospho-alpha-D-ribosyl-1-pyrophosphate (PRPP) via the transfer of pyrophosphoryl group from ATP to 1-hydroxyl of ribose-5-phosphate (Rib-5-P). This Synechocystis sp. (strain ATCC 27184 / PCC 6803 / Kazusa) protein is Ribose-phosphate pyrophosphokinase.